We begin with the raw amino-acid sequence, 210 residues long: dTTP/UTP pyrophosphatase (210 aa).

Aspartate 89 serves as the catalytic Proton acceptor.

This sequence belongs to the Maf family. YhdE subfamily. A divalent metal cation serves as cofactor.

The protein resides in the cytoplasm. It carries out the reaction dTTP + H2O = dTMP + diphosphate + H(+). It catalyses the reaction UTP + H2O = UMP + diphosphate + H(+). Nucleoside triphosphate pyrophosphatase that hydrolyzes dTTP and UTP. May have a dual role in cell division arrest and in preventing the incorporation of modified nucleotides into cellular nucleic acids. The chain is dTTP/UTP pyrophosphatase from Burkholderia lata (strain ATCC 17760 / DSM 23089 / LMG 22485 / NCIMB 9086 / R18194 / 383).